A 65-amino-acid chain; its full sequence is Large ribosomal subunit protein bL35 (65 aa).

The tract at residues 1 to 26 (MPKIKTLRSAAKRFKKTESGKFKRKQ) is disordered.

This sequence belongs to the bacterial ribosomal protein bL35 family.

This Buchnera aphidicola subsp. Baizongia pistaciae (strain Bp) protein is Large ribosomal subunit protein bL35.